Consider the following 899-residue polypeptide: Protein translocase subunit SecA (899 aa).

ATP-binding positions include Q87, 105-109 (GEGKT), and D512. 2 disordered regions span residues 573 to 592 (RRID…PGSS) and 861 to 899 (ITVN…CCGK). C885, C887, C896, and C897 together coordinate Zn(2+).

The protein belongs to the SecA family. In terms of assembly, monomer and homodimer. Part of the essential Sec protein translocation apparatus which comprises SecA, SecYEG and auxiliary proteins SecDF-YajC and YidC. It depends on Zn(2+) as a cofactor.

It is found in the cell inner membrane. Its subcellular location is the cytoplasm. The enzyme catalyses ATP + H2O + cellular proteinSide 1 = ADP + phosphate + cellular proteinSide 2.. Its function is as follows. Part of the Sec protein translocase complex. Interacts with the SecYEG preprotein conducting channel. Has a central role in coupling the hydrolysis of ATP to the transfer of proteins into and across the cell membrane, serving as an ATP-driven molecular motor driving the stepwise translocation of polypeptide chains across the membrane. This is Protein translocase subunit SecA from Trichlorobacter lovleyi (strain ATCC BAA-1151 / DSM 17278 / SZ) (Geobacter lovleyi).